The following is a 401-amino-acid chain: Glycerol-1-phosphate dehydrogenase [NAD(P)+] (401 aa).

NAD(+)-binding positions include Asp57, 118–122 (GTIHD), and 140–143 (TAPS). Asp145 lines the substrate pocket. NAD(+) is bound at residue Ser149. Asp192 provides a ligand contact to substrate. Ni(2+) contacts are provided by Asp192 and His272. Residue His276 participates in substrate binding. Ni(2+) is bound at residue His292.

This sequence belongs to the glycerol-1-phosphate dehydrogenase family. As to quaternary structure, homodimer. It depends on Ni(2+) as a cofactor.

The protein localises to the cytoplasm. The catalysed reaction is sn-glycerol 1-phosphate + NAD(+) = dihydroxyacetone phosphate + NADH + H(+). It catalyses the reaction sn-glycerol 1-phosphate + NADP(+) = dihydroxyacetone phosphate + NADPH + H(+). In terms of biological role, catalyzes the NAD(P)H-dependent reduction of dihydroxyacetonephosphate (DHAP or glycerone phosphate) to glycerol 1-phosphate (G1P). The G1P thus generated is probably used for the synthesis of phosphoglycerolipids in Gram-positive bacterial species. In Bacillus licheniformis (strain ATCC 14580 / DSM 13 / JCM 2505 / CCUG 7422 / NBRC 12200 / NCIMB 9375 / NCTC 10341 / NRRL NRS-1264 / Gibson 46), this protein is Glycerol-1-phosphate dehydrogenase [NAD(P)+].